Here is a 124-residue protein sequence, read N- to C-terminus: Large ribosomal subunit protein uL18 (124 aa).

Belongs to the universal ribosomal protein uL18 family. As to quaternary structure, part of the 50S ribosomal subunit; part of the 5S rRNA/L5/L18/L25 subcomplex. Contacts the 5S and 23S rRNAs.

Its function is as follows. This is one of the proteins that bind and probably mediate the attachment of the 5S RNA into the large ribosomal subunit, where it forms part of the central protuberance. This is Large ribosomal subunit protein uL18 from Thermomicrobium roseum (strain ATCC 27502 / DSM 5159 / P-2).